The sequence spans 367 residues: MKTSHLIRIALPGALAAALLASQVSQAADLVPPPGYYAAVGERKGNAGSCPAVPPPYTGSLVFTSKYEGSDSARATLNVKAEKTFRSQIKDITDMERGATKLVTQYMRSGRDGDLACALNWMSTWARAGALQSDDFNHTGKSMRKWALGSLSGAYMRLKFSSSRPLAAHAEQSREIEDWFARLGTQVVRDWSGLPLKKINNHSYWAAWSVMSTAVVTNRRDLFDWAVSEFKVAANQVDEQGFLPNELKRRQRALAYHNYALPPLAMIAAFAQVNGVDLRQENHGALQRLAERVMKGVDDEETFEEKTGEDQDMTDLKVDNKYAWLEPYCALYRCEPKMLEAKKDREPFNSFRLGGEVTRVFSREGGS.

The signal sequence occupies residues 1–27; that stretch reads MKTSHLIRIALPGALAAALLASQVSQA. Substrate-binding positions include 65 to 66, 138 to 139, and Tyr-256; these read SK and HT.

It belongs to the polysaccharide lyase 5 family.

The protein resides in the periplasm. It catalyses the reaction Eliminative cleavage of alginate to give oligosaccharides with 4-deoxy-alpha-L-erythro-hex-4-enuronosyl groups at their non-reducing ends and beta-D-mannuronate at their reducing end.. Its function is as follows. Catalyzes the depolymerization of alginate by cleaving the beta-1,4 glycosidic bond between two adjacent sugar residues via a beta-elimination mechanism. May serve to degrade mislocalized alginate that is trapped in the periplasmic space. The chain is Alginate lyase from Pseudomonas aeruginosa (strain LESB58).